The following is a 318-amino-acid chain: Cytochrome f (318 aa).

Positions 1-32 are cleaved as a signal peptide; sequence MQNKNNYNWLKEWVIRSFLLLTLLTWPSVSNA. The heme site is built by tyrosine 33, cysteine 53, cysteine 56, and histidine 57. Residues 284–304 traverse the membrane as a helical segment; it reads IQGLLLFFASVVLAQIFLVLK.

This sequence belongs to the cytochrome f family. In terms of assembly, the 4 large subunits of the cytochrome b6-f complex are cytochrome b6, subunit IV (17 kDa polypeptide, petD), cytochrome f and the Rieske protein, while the 4 small subunits are PetG, PetL, PetM and PetN. The complex functions as a dimer. It depends on heme as a cofactor.

The protein localises to the plastid. Its subcellular location is the chloroplast thylakoid membrane. In terms of biological role, component of the cytochrome b6-f complex, which mediates electron transfer between photosystem II (PSII) and photosystem I (PSI), cyclic electron flow around PSI, and state transitions. This is Cytochrome f from Angiopteris evecta (Mule's foot fern).